A 340-amino-acid polypeptide reads, in one-letter code: Probable glucan endo-1,3-beta-glucosidase BG1 (340 aa).

The N-terminal stretch at 1–25 is a signal peptide; the sequence is MDLRFLASLTLLLGLFFVNTNPTGG. Glu120 serves as the catalytic Proton donor. Glu262 (nucleophile) is an active-site residue.

Belongs to the glycosyl hydrolase 17 family.

The protein resides in the secreted. It catalyses the reaction Hydrolysis of (1-&gt;3)-beta-D-glucosidic linkages in (1-&gt;3)-beta-D-glucans.. Its function is as follows. May play a role in plant defense against pathogens. In Arabidopsis thaliana (Mouse-ear cress), this protein is Probable glucan endo-1,3-beta-glucosidase BG1.